The primary structure comprises 2533 residues: Highly reducing polyketide synthase azaB (2533 aa).

Residues 7 to 433 form the Ketosynthase family 3 (KS3) domain; that stretch reads TAPMAIIGMA…GSNAHAILES (427 aa). Catalysis depends on for beta-ketoacyl synthase activity residues Cys-180, His-315, and His-355. The interval 554 to 821 is malonyl-CoA:ACP transacylase (MAT) domain; sequence WVFTGQGAQW…VEFESSFRHM (268 aa). The tract at residues 946–1081 is N-terminal hotdog fold; it reads SDLVGYSQPS…GRISVITTSD (136 aa). In terms of domain architecture, PKS/mFAS DH spans 946–1254; it reads SDLVGYSQPS…CQSLGRALDR (309 aa). The interval 947 to 1251 is dehydratase (DH) domain; sequence DLVGYSQPSI…GLTCQSLGRA (305 aa). His-978 acts as the Proton acceptor; for dehydratase activity in catalysis. The C-terminal hotdog fold stretch occupies residues 1097–1254; sequence YNRRIDPRYM…CQSLGRALDR (158 aa). Catalysis depends on Asp-1163, which acts as the Proton donor; for dehydratase activity. Positions 1419 to 1554 are methyltransferase (CMet) domain; the sequence is TRQVSELVRL…GGKLILMETT (136 aa). The enoyl reductase (ER) domain stretch occupies residues 1839–2155; the sequence is GLIDTLVFHD…TGQHMGKIII (317 aa). Residues 2178 to 2349 form a ketoreductase (KR) domain region; the sequence is ASYVIVGGLG…AVSLDLGIVR (172 aa). The Carrier domain maps to 2455–2532; the sequence is DAAALICQEL…DLSLRVATKR (78 aa). Ser-2492 carries the O-(pantetheine 4'-phosphoryl)serine modification.

The protein operates within secondary metabolite biosynthesis. Highly reducing polyketide synthase; part of the gene cluster that mediates the biosynthesis of azaphilones, a class of fungal metabolites characterized by a highly oxygenated pyrano-quinone bicyclic core and exhibiting a broad range of bioactivities. In the first step, the non-reducing polyketide synthase azaA forms the hexaketide precursor from successive condensations of five malonyl-CoA units, presumably with a simple acetyl-CoA starter unit. The reactive polyketide chain then undergoes a PT-mediated C2-C7 cyclization to afford the aromatic ring and is eventually released as an aldehyde through the R-domain. The putative ketoreductase azaE is proposed to catalyze the reduction of the terminal ketone resulting in the early culture product FK17-P2a. The monooxygenase azaH was demonstrated to be the only enzyme required to convert FK17-P2a to azanigerone E. AzaH first hydroxylates the benzaldehyde intermediate FK17-P2a at C4, which triggers the formation of the pyran-ring to afford azanigerone E. In parallel, the 2,4-dimethylhexanoyl chain is synthesized by the HR-PKS azaB and is proposed to be transferred to the C4-hydroxyl of azanigerone E by the acyltransferase azaD directly from the ACP domain of azaB. Alternatively, the 2,4-dimethyl-hexanoyl chain may be offloaded from the HR-PKS as a carboxylic acid and converted to an acyl-CoA by azaF. The resulting acyl-CoA molecule could then be taken up as a substrate by AzaD to form azanigerone B. To yield the carboxylic acid substituent in azanigerone A, the hydroxypropyl side chain of azanigerone B would need to undergo a C-C oxidative cleavage catalyzed by cytochrome P450 AzaI. AzaI is proposed to act on a vicinal diol that leads to a C-C bond scission either through an alkoxyradical intermediate or a peroxy complex. In the biosynthesis of azanigerone A, azanigerone B first undergoes hydroxylation at C10, possibly catalyzed by one of the two FAD-dependent monooxygenases encoded in the cluster, azaG or azaL, resulting in the vicinal diol azanigerone C. Oxidative cleavage of azanigerone C by azaI would yield the corresponding aldehyde derivative of azanigerone A. Finally, the dehydrogenase azaJ is proposed to convert the aldehyde functional group into the carboxylic acid, completing the conversion from azanigerone B to azanigerone A. Alternatively, the oxidation of aldehyde to carboxylic acid may be catalyzed by the same P450 enzyme azaI via consecutive oxidation or by endogenous alcohol dehydrogenase. The protein is Highly reducing polyketide synthase azaB of Aspergillus niger (strain ATCC 1015 / CBS 113.46 / FGSC A1144 / LSHB Ac4 / NCTC 3858a / NRRL 328 / USDA 3528.7).